A 132-amino-acid chain; its full sequence is Inclusion membrane protein E (132 aa).

A run of 2 helical transmembrane segments spans residues 41-61 (LGVV…AVGV) and 66-86 (FALG…ATSA).

It localises to the secreted. The protein resides in the host vacuole. It is found in the host pathogen-containing vacuole. The protein localises to the host pathogen-containing vacuole membrane. Inclusion membrane protein probably involved in early modification events of the chlamydial inclusion. The protein is Inclusion membrane protein E of Chlamydia trachomatis serovar L2 (strain ATCC VR-902B / DSM 19102 / 434/Bu).